Here is a 585-residue protein sequence, read N- to C-terminus: Bifunctional purine biosynthesis protein ade10 (585 aa).

Residues 1-142 (MYALLSVYDK…KNHARVTILS (142 aa)) form the MGS-like domain. IMP-binding positions include 30 to 33 (SGGT), 60 to 63 (RVKT), 97 to 98 (CN), and 121 to 122 (DI). Lys-133 functions as the Proton donor/acceptor; for FAICAR cyclization activity in the catalytic mechanism. 5-amino-1-(5-phospho-beta-D-ribosyl)imidazole-4-carboxamide is bound by residues 200–201 (RY), His-260, Gly-308, Asp-331, Asn-423, and Arg-443. The active-site Proton acceptor; for AICAR formyltransferase activity is His-260. Ile-444 provides a ligand contact to (6R)-10-formyltetrahydrofolate. Phe-534 provides a ligand contact to 5-amino-1-(5-phospho-beta-D-ribosyl)imidazole-4-carboxamide. (6R)-10-formyltetrahydrofolate is bound by residues Asp-539 and 558 to 559 (SV). Arg-581 contacts 5-amino-1-(5-phospho-beta-D-ribosyl)imidazole-4-carboxamide.

This sequence belongs to the PurH family. As to quaternary structure, homodimer.

Its subcellular location is the cytoplasm. The protein localises to the cytosol. The enzyme catalyses (6R)-10-formyltetrahydrofolate + 5-amino-1-(5-phospho-beta-D-ribosyl)imidazole-4-carboxamide = 5-formamido-1-(5-phospho-D-ribosyl)imidazole-4-carboxamide + (6S)-5,6,7,8-tetrahydrofolate. It catalyses the reaction IMP + H2O = 5-formamido-1-(5-phospho-D-ribosyl)imidazole-4-carboxamide. It participates in purine metabolism; IMP biosynthesis via de novo pathway; 5-formamido-1-(5-phospho-D-ribosyl)imidazole-4-carboxamide from 5-amino-1-(5-phospho-D-ribosyl)imidazole-4-carboxamide (10-formyl THF route): step 1/1. Its pathway is purine metabolism; IMP biosynthesis via de novo pathway; IMP from 5-formamido-1-(5-phospho-D-ribosyl)imidazole-4-carboxamide: step 1/1. Functionally, bifunctional enzyme that catalyzes the last two steps of purine biosynthesis. Acts as a transformylase that incorporates a formyl group to the AMP analog AICAR (5-amino-1-(5-phospho-beta-D-ribosyl)imidazole-4-carboxamide) to produce the intermediate formyl-AICAR (FAICAR). Also catalyzes the cyclization of FAICAR to IMP. This is Bifunctional purine biosynthesis protein ade10 (ade10) from Schizosaccharomyces pombe (strain 972 / ATCC 24843) (Fission yeast).